We begin with the raw amino-acid sequence, 157 residues long: NADPH-dependent 7-cyano-7-deazaguanine reductase (157 aa).

The active-site Thioimide intermediate is the Cys-55. The Proton donor role is filled by Asp-62. Substrate-binding positions include 77 to 79 (VES) and 96 to 97 (HE).

It belongs to the GTP cyclohydrolase I family. QueF type 1 subfamily.

The protein localises to the cytoplasm. It catalyses the reaction 7-aminomethyl-7-carbaguanine + 2 NADP(+) = 7-cyano-7-deazaguanine + 2 NADPH + 3 H(+). Its pathway is tRNA modification; tRNA-queuosine biosynthesis. Its function is as follows. Catalyzes the NADPH-dependent reduction of 7-cyano-7-deazaguanine (preQ0) to 7-aminomethyl-7-deazaguanine (preQ1). This chain is NADPH-dependent 7-cyano-7-deazaguanine reductase, found in Neisseria meningitidis serogroup A / serotype 4A (strain DSM 15465 / Z2491).